The chain runs to 326 residues: Vitamin B12 import system permease protein BtuC (326 aa).

The next 9 membrane-spanning stretches (helical) occupy residues 15 to 35, 61 to 81, 88 to 108, 112 to 132, 146 to 166, 184 to 204, 240 to 260, 274 to 294, and 302 to 322; these read WLLC…CAGE, LAVL…QALF, PGLL…VLLG, LPNW…TLIL, LLAG…AIYF, GGVD…LLWI, GWMV…GLVI, VLLP…DIVA, and ELPI…WLLL.

This sequence belongs to the binding-protein-dependent transport system permease family. FecCD subfamily. As to quaternary structure, the complex is composed of two ATP-binding proteins (BtuD), two transmembrane proteins (BtuC) and a solute-binding protein (BtuF).

The protein localises to the cell inner membrane. Functionally, part of the ABC transporter complex BtuCDF involved in vitamin B12 import. Involved in the translocation of the substrate across the membrane. The sequence is that of Vitamin B12 import system permease protein BtuC from Shigella boydii serotype 18 (strain CDC 3083-94 / BS512).